An 830-amino-acid chain; its full sequence is Penicillin-binding protein 1A (830 aa).

At Met1–Asn18 the chain is on the cytoplasmic side. Residues Val19–Ile39 form a helical; Signal-anchor for type II membrane protein membrane-spanning segment. The Extracellular segment spans residues Lys40 to Gln830. The transglycosylase stretch occupies residues Ser57–Ala229. Catalysis depends on Glu96, which acts as the Proton donor; for transglycosylase activity. The interval Ala357 to Lys641 is transpeptidase. Ser398 functions as the Acyl-ester intermediate; for transpeptidase activity in the catalytic mechanism. Residues Gly754 to Gln830 are disordered. The span at Thr760–Ser786 shows a compositional bias: basic and acidic residues. A compositionally biased stretch (low complexity) spans Gln787–Asn820. Over residues Gln821–Gln830 the composition is skewed to basic and acidic residues.

It in the N-terminal section; belongs to the glycosyltransferase 51 family. In the C-terminal section; belongs to the transpeptidase family.

Its subcellular location is the cell membrane. The catalysed reaction is [GlcNAc-(1-&gt;4)-Mur2Ac(oyl-L-Ala-gamma-D-Glu-L-Lys-D-Ala-D-Ala)](n)-di-trans,octa-cis-undecaprenyl diphosphate + beta-D-GlcNAc-(1-&gt;4)-Mur2Ac(oyl-L-Ala-gamma-D-Glu-L-Lys-D-Ala-D-Ala)-di-trans,octa-cis-undecaprenyl diphosphate = [GlcNAc-(1-&gt;4)-Mur2Ac(oyl-L-Ala-gamma-D-Glu-L-Lys-D-Ala-D-Ala)](n+1)-di-trans,octa-cis-undecaprenyl diphosphate + di-trans,octa-cis-undecaprenyl diphosphate + H(+). It carries out the reaction Preferential cleavage: (Ac)2-L-Lys-D-Ala-|-D-Ala. Also transpeptidation of peptidyl-alanyl moieties that are N-acyl substituents of D-alanine.. Its pathway is cell wall biogenesis; peptidoglycan biosynthesis. Functionally, cell wall formation. Synthesis of cross-linked peptidoglycan from the lipid intermediates. The enzyme has a penicillin-insensitive transglycosylase N-terminal domain (formation of linear glycan strands) and a penicillin-sensitive transpeptidase C-terminal domain (cross-linking of the peptide subunits). The polypeptide is Penicillin-binding protein 1A (pbpA) (Clostridium botulinum (strain Hall / ATCC 3502 / NCTC 13319 / Type A)).